We begin with the raw amino-acid sequence, 87 residues long: Small ribosomal subunit protein uS17 (87 aa).

It belongs to the universal ribosomal protein uS17 family. As to quaternary structure, part of the 30S ribosomal subunit.

Its function is as follows. One of the primary rRNA binding proteins, it binds specifically to the 5'-end of 16S ribosomal RNA. This Cytophaga hutchinsonii (strain ATCC 33406 / DSM 1761 / CIP 103989 / NBRC 15051 / NCIMB 9469 / D465) protein is Small ribosomal subunit protein uS17.